The following is a 281-amino-acid chain: Ribosomal RNA small subunit methyltransferase J (281 aa).

Residues 129-130, 145-146, and Asp199 each bind S-adenosyl-L-methionine; these read RD and ER.

The protein belongs to the methyltransferase superfamily. RsmJ family.

It localises to the cytoplasm. The enzyme catalyses guanosine(1516) in 16S rRNA + S-adenosyl-L-methionine = N(2)-methylguanosine(1516) in 16S rRNA + S-adenosyl-L-homocysteine + H(+). Its function is as follows. Specifically methylates the guanosine in position 1516 of 16S rRNA. The sequence is that of Ribosomal RNA small subunit methyltransferase J from Laribacter hongkongensis (strain HLHK9).